The sequence spans 599 residues: Putative sensor histidine kinase NtrY-like (599 aa).

4 helical membrane-spanning segments follow: residues 17–37, 44–64, 85–105, and 285–305; these read VLIFTLATAAIIFACATFYVI, FSTIIGFLLVDLAIFLILGVV, IVIAFSLVAAIPTIIVSVFSV, and IMFIFIALLLLFVAISFGVIF. Residues 307 to 361 form the HAMP domain; it reads AKIVKPIKKLVTATDNVKDGDLTVQVPENEVDKDEIGTLYVAFNRMIKQLSRQQR. The Histidine kinase domain maps to 378–589; it reads KVAHEIKNPL…IIDIKFDLKE (212 aa). His381 carries the post-translational modification Phosphohistidine; by autocatalysis.

Its subcellular location is the cell membrane. It carries out the reaction ATP + protein L-histidine = ADP + protein N-phospho-L-histidine.. Functionally, member of the two-component regulatory system RC0948/RC0849. This is Putative sensor histidine kinase NtrY-like from Rickettsia conorii (strain ATCC VR-613 / Malish 7).